The chain runs to 173 residues: Transcription factor HES-2 (173 aa).

The region spanning 13–70 is the bHLH domain; that stretch reads LRKSLKPLLEKRRRARINQSLSQLKGLILPLLGRENSNCSKLEKADVLEMTVRFLQEL. In terms of domain architecture, Orange spans 86-119; sequence YREGYSACVARLARVLPACRVLEPAVSARLLEHL. Residues 128 to 173 are disordered; the sequence is LDGGRAGDSSGPSAPAPAPASAPEPASAPVPSPPSPPCGPGLWRPW. The segment covering 141–166 has biased composition (pro residues); the sequence is APAPAPASAPEPASAPVPSPPSPPCG. The WRPW motif motif lies at 170–173; sequence WRPW.

In terms of assembly, transcription repression requires formation of a complex with a corepressor protein of the Groucho/TLE family. In terms of tissue distribution, expressed in placenta, pancreatic cancer, colon cancer with RER, cervical cancer, and in head and neck tumors.

It is found in the nucleus. Functionally, transcriptional repressor of genes that require a bHLH protein for their transcription. The protein is Transcription factor HES-2 (HES2) of Homo sapiens (Human).